Consider the following 289-residue polypeptide: Eukaryotic translation initiation factor 3 subunit G (289 aa).

The interval 1 to 33 is disordered; that stretch reads MSRPTKADWADDEEFDDPSALPPQQITTNKDGT. One can recognise an RRM domain in the interval 209-287; sequence ATLRVTNVSE…LILRVEFAKR (79 aa).

This sequence belongs to the eIF-3 subunit G family. In terms of assembly, component of the eukaryotic translation initiation factor 3 (eIF-3) complex.

Its subcellular location is the cytoplasm. Functionally, RNA-binding component of the eukaryotic translation initiation factor 3 (eIF-3) complex, which is involved in protein synthesis of a specialized repertoire of mRNAs and, together with other initiation factors, stimulates binding of mRNA and methionyl-tRNAi to the 40S ribosome. The eIF-3 complex specifically targets and initiates translation of a subset of mRNAs involved in cell proliferation. This subunit can bind 18S rRNA. In Emericella nidulans (strain FGSC A4 / ATCC 38163 / CBS 112.46 / NRRL 194 / M139) (Aspergillus nidulans), this protein is Eukaryotic translation initiation factor 3 subunit G (tif35).